A 209-amino-acid polypeptide reads, in one-letter code: MIAIIDYGMGNIRSVEQALKYIGAAYIVTSDKEEIFRSDGVILPGVGAFPKAMDILEEKDLVRVLQEIGCSRKPLLGICLGMQLLFEKSEELQDCNGLSLLPGVIRKLKVPYKIPHMGWNELKKEGEIALWNGVEDSSFVYYVHSYYADCPNEIVYGISDYGVKVPGFVAKGNIYGAQFHPEKSGDIGMQMLKNFKGVVETWKSSQLSI.

The 205-residue stretch at 1 to 205 (MIAIIDYGMG…KGVVETWKSS (205 aa)) folds into the Glutamine amidotransferase type-1 domain. Cys-79 acts as the Nucleophile in catalysis. Catalysis depends on residues His-180 and Glu-182.

As to quaternary structure, heterodimer of HisH and HisF.

The protein resides in the cytoplasm. It catalyses the reaction 5-[(5-phospho-1-deoxy-D-ribulos-1-ylimino)methylamino]-1-(5-phospho-beta-D-ribosyl)imidazole-4-carboxamide + L-glutamine = D-erythro-1-(imidazol-4-yl)glycerol 3-phosphate + 5-amino-1-(5-phospho-beta-D-ribosyl)imidazole-4-carboxamide + L-glutamate + H(+). The catalysed reaction is L-glutamine + H2O = L-glutamate + NH4(+). It functions in the pathway amino-acid biosynthesis; L-histidine biosynthesis; L-histidine from 5-phospho-alpha-D-ribose 1-diphosphate: step 5/9. Its function is as follows. IGPS catalyzes the conversion of PRFAR and glutamine to IGP, AICAR and glutamate. The HisH subunit catalyzes the hydrolysis of glutamine to glutamate and ammonia as part of the synthesis of IGP and AICAR. The resulting ammonia molecule is channeled to the active site of HisF. This chain is Imidazole glycerol phosphate synthase subunit HisH, found in Bacillus thuringiensis subsp. konkukian (strain 97-27).